Consider the following 197-residue polypeptide: Imidazoleglycerol-phosphate dehydratase (197 aa).

Belongs to the imidazoleglycerol-phosphate dehydratase family.

It localises to the cytoplasm. The enzyme catalyses D-erythro-1-(imidazol-4-yl)glycerol 3-phosphate = 3-(imidazol-4-yl)-2-oxopropyl phosphate + H2O. The protein operates within amino-acid biosynthesis; L-histidine biosynthesis; L-histidine from 5-phospho-alpha-D-ribose 1-diphosphate: step 6/9. This Stutzerimonas stutzeri (strain A1501) (Pseudomonas stutzeri) protein is Imidazoleglycerol-phosphate dehydratase.